The following is a 400-amino-acid chain: Telomere repeat-binding protein 6 (400 aa).

The Ubiquitin-like domain maps to 173–252; sequence VKFGIKSLNI…DDENLGSLGF (80 aa). The HTH myb-type domain occupies 310–369; the sequence is VQRRIRRPFTVSEVEALVQAVERLGTGRWRDVKSHAFNHVNHRTYVDLKDKWKTLVHTAK. Positions 338-365 form a DNA-binding region, H-T-H motif; sequence WRDVKSHAFNHVNHRTYVDLKDKWKTLV.

Homodimer. Expressed ubiquitously.

It is found in the nucleus. Binds specifically to the plant telomeric double-stranded DNA sequences. At least 4 repeats of telomeric sequences are required for binding. The chain is Telomere repeat-binding protein 6 (TRP6) from Arabidopsis thaliana (Mouse-ear cress).